Here is a 449-residue protein sequence, read N- to C-terminus: mRNA-capping enzyme subunit alpha (449 aa).

The N6-GMP-lysine intermediate role is filled by Lys66. Residues 405 to 449 are disordered; it reads DERKNGAYQHHSSSFSESRQQPKAEPVAEKKQTEPKYVDDDDWSD. The span at 414–423 shows a compositional bias: polar residues; it reads HHSSSFSESR. Residues 424–442 show a composition bias toward basic and acidic residues; that stretch reads QQPKAEPVAEKKQTEPKYV.

Belongs to the eukaryotic GTase family. As to quaternary structure, heterodimer. The mRNA-capping enzyme is composed of two separate chains alpha and beta, respectively a mRNA guanylyltransferase and an mRNA 5'-triphosphate monophosphatase.

It is found in the nucleus. The enzyme catalyses a 5'-end diphospho-ribonucleoside in mRNA + GTP + H(+) = a 5'-end (5'-triphosphoguanosine)-ribonucleoside in mRNA + diphosphate. Its function is as follows. Second step of mRNA capping. Transfer of the GMP moiety of GTP to the 5'-end of RNA via an enzyme-GMP covalent reaction intermediate. In Candida glabrata (strain ATCC 2001 / BCRC 20586 / JCM 3761 / NBRC 0622 / NRRL Y-65 / CBS 138) (Yeast), this protein is mRNA-capping enzyme subunit alpha (CEG1).